Reading from the N-terminus, the 152-residue chain is Protein Smg homolog (152 aa).

It belongs to the Smg family.

This Nitrosomonas eutropha (strain DSM 101675 / C91 / Nm57) protein is Protein Smg homolog.